Reading from the N-terminus, the 347-residue chain is Protease HtpX homolog (347 aa).

The next 3 helical transmembrane spans lie at 8–28 (IAFG…VVIA), 46–66 (ALTA…IAIV), and 76–96 (WGFI…TYIA). His-174 contacts Zn(2+). Glu-175 is an active-site residue. His-178 lines the Zn(2+) pocket. A run of 2 helical transmembrane segments spans residues 185–205 (ALML…VSSV) and 221–241 (LLAA…LLVL). Glu-248 provides a ligand contact to Zn(2+).

The protein belongs to the peptidase M48B family. Requires Zn(2+) as cofactor.

Its subcellular location is the cell membrane. The sequence is that of Protease HtpX homolog from Pyrobaculum islandicum (strain DSM 4184 / JCM 9189 / GEO3).